A 344-amino-acid polypeptide reads, in one-letter code: Dihydroorotase (344 aa).

Zn(2+) is bound by residues His-13 and His-15. Substrate contacts are provided by residues 15-17 (HLR) and Asn-41. Residues Lys-99, His-136, and His-174 each contribute to the Zn(2+) site. Lys-99 carries the post-translational modification N6-carboxylysine. His-136 provides a ligand contact to substrate. Leu-219 serves as a coordination point for substrate. Asp-247 is a Zn(2+) binding site. Residue Asp-247 is part of the active site. Residues His-251 and Ala-263 each coordinate substrate.

This sequence belongs to the metallo-dependent hydrolases superfamily. DHOase family. Class II DHOase subfamily. In terms of assembly, homodimer. The cofactor is Zn(2+).

The catalysed reaction is (S)-dihydroorotate + H2O = N-carbamoyl-L-aspartate + H(+). Its pathway is pyrimidine metabolism; UMP biosynthesis via de novo pathway; (S)-dihydroorotate from bicarbonate: step 3/3. Functionally, catalyzes the reversible cyclization of carbamoyl aspartate to dihydroorotate. The chain is Dihydroorotase from Microcystis aeruginosa (strain NIES-843 / IAM M-2473).